The primary structure comprises 144 residues: uncharacterized protein (144 aa).

The tract at residues Met-1–Glu-24 is disordered. The span at Glu-12–Glu-24 shows a compositional bias: basic and acidic residues.

This is an uncharacterized protein from Aquifex aeolicus (strain VF5).